The sequence spans 315 residues: Protein FRA10AC1 homolog (315 aa).

The residue at position 1 (Met-1) is an N-acetylmethionine. Residues 1–28 form a disordered region; the sequence is MHGHGGYDSDFSDDEQGGGSSKKRKKTV. Ser-9 and Ser-12 each carry phosphoserine. At Lys-36 the chain carries N6-acetyllysine. Over residues 225–235 the composition is skewed to basic residues; that stretch reads KEIKSTKKRSK. The disordered stretch occupies residues 225-308; the sequence is KEIKSTKKRS…EKSQEEEFDD (84 aa). Residues 236–245 are compositionally biased toward basic and acidic residues; it reads TKTESDESPH. A phosphoserine mark is found at Ser-251 and Ser-252. The span at 257–279 shows a compositional bias: basic and acidic residues; the sequence is SQGKDEGHSSSKRSEDSRNRNAG. Phosphoserine occurs at positions 283 and 285.

In terms of assembly, interacts with ESS2.

The protein localises to the nucleus. May be involved in pre-mRNA splicing. This Rattus norvegicus (Rat) protein is Protein FRA10AC1 homolog (Fra10ac1).